The sequence spans 500 residues: Probable cytosol aminopeptidase (500 aa).

Mn(2+)-binding residues include Lys268 and Asp273. Residue Lys280 is part of the active site. Residues Asp291, Asp350, and Glu352 each coordinate Mn(2+). Arg354 is a catalytic residue.

It belongs to the peptidase M17 family. Mn(2+) serves as cofactor.

The protein resides in the cytoplasm. It catalyses the reaction Release of an N-terminal amino acid, Xaa-|-Yaa-, in which Xaa is preferably Leu, but may be other amino acids including Pro although not Arg or Lys, and Yaa may be Pro. Amino acid amides and methyl esters are also readily hydrolyzed, but rates on arylamides are exceedingly low.. It carries out the reaction Release of an N-terminal amino acid, preferentially leucine, but not glutamic or aspartic acids.. Functionally, presumably involved in the processing and regular turnover of intracellular proteins. Catalyzes the removal of unsubstituted N-terminal amino acids from various peptides. The polypeptide is Probable cytosol aminopeptidase (Alkaliphilus metalliredigens (strain QYMF)).